Consider the following 177-residue polypeptide: ATP-dependent protease subunit HslV (177 aa).

Threonine 6 is an active-site residue. 3 residues coordinate Na(+): serine 162, cysteine 165, and threonine 168.

Belongs to the peptidase T1B family. HslV subfamily. As to quaternary structure, a double ring-shaped homohexamer of HslV is capped on each side by a ring-shaped HslU homohexamer. The assembly of the HslU/HslV complex is dependent on binding of ATP.

Its subcellular location is the cytoplasm. It catalyses the reaction ATP-dependent cleavage of peptide bonds with broad specificity.. With respect to regulation, allosterically activated by HslU binding. Functionally, protease subunit of a proteasome-like degradation complex believed to be a general protein degrading machinery. This Desulforudis audaxviator (strain MP104C) protein is ATP-dependent protease subunit HslV.